We begin with the raw amino-acid sequence, 275 residues long: MSQQLQQIIDNAWENRAELSPKAAPAEVREAVAHAIEQLDKGALRVAEKIDGNWTVHQWLKKAVLLSFRLEDNAPMPAGGYSQFYDKVPSKFANYTAEDFAAGGFRVVPPAIARRGSFIAKNVVLMPSYTNIGAYVDEGTMVDTWATVGSCAQIGKNVHLSGGVGIGGVLEPLQANPVIIEDNCFIGARSEVVEGVIVEENSVISMGVYLGQSTKIYDRETGEISYGRIPAGSVVVAGNLPSKDGSHSLYCAVIVKKVDAKTRAKVGLNELLRGD.

Belongs to the transferase hexapeptide repeat family.

The protein resides in the cytoplasm. The enzyme catalyses (S)-2,3,4,5-tetrahydrodipicolinate + succinyl-CoA + H2O = (S)-2-succinylamino-6-oxoheptanedioate + CoA. The protein operates within amino-acid biosynthesis; L-lysine biosynthesis via DAP pathway; LL-2,6-diaminopimelate from (S)-tetrahydrodipicolinate (succinylase route): step 1/3. The sequence is that of 2,3,4,5-tetrahydropyridine-2,6-dicarboxylate N-succinyltransferase from Burkholderia multivorans (strain ATCC 17616 / 249).